The sequence spans 694 residues: Proprotein convertase subtilisin/kexin type 9 (694 aa).

Residues 1 to 34 (MGTHCSAWLRWPLLPLLPPLLLLLLLLCPTGAGA) form the signal peptide. The propeptide occupies 35 to 155 (QDEDGDYEEL…IEEDSFVFAQ (121 aa)). The residue at position 41 (tyrosine 41) is a Sulfotyrosine. A Phosphoserine modification is found at serine 50. The region spanning 158–470 (PWNLERIIPA…RTVWSAHSGP (313 aa)) is the Peptidase S8 domain. Active-site charge relay system residues include aspartate 189 and histidine 229. Disulfide bonds link cysteine 226-cysteine 258 and cysteine 326-cysteine 361. The Charge relay system role is filled by serine 389. Residues 453 to 694 (ETGGQLLCRT…RPSAKASWVQ (242 aa)) form a C-terminal domain region. 3 disulfides stabilise this stretch: cysteine 460-cysteine 530, cysteine 480-cysteine 529, and cysteine 489-cysteine 512. A Cell attachment site motif is present at residues 499 to 501 (RGD). The N-linked (GlcNAc...) asparagine glycan is linked to asparagine 536. 6 cysteine pairs are disulfide-bonded: cysteine 537–cysteine 604, cysteine 555–cysteine 603, cysteine 565–cysteine 591, cysteine 611–cysteine 682, cysteine 629–cysteine 681, and cysteine 638–cysteine 657. Phosphoserine is present on serine 691.

It belongs to the peptidase S8 family. Monomer. Can self-associate to form dimers and higher multimers which may have increased LDLR degrading activity. The precursor protein but not the mature protein may form multimers. Interacts with APOB, VLDLR, LRP8/APOER2 and BACE1. The full-length immature form (pro-PCSK9) interacts with SCNN1A, SCNN1B and SCNN1G. The pro-PCSK9 form (via C-terminal domain) interacts with LDLR. Interacts (via the C-terminal domain) with ANXA2 (via repeat Annexin 1); the interaction inhibits the degradation of LDLR. The cofactor is Ca(2+). Post-translationally, cleavage by furin and PCSK5 generates a truncated inactive protein that is unable to induce LDLR degradation. In terms of processing, undergoes autocatalytic cleavage in the endoplasmic reticulum to release the propeptide from the N-terminus and the cleavage of the propeptide is strictly required for its maturation and activation. The cleaved propeptide however remains associated with the catalytic domain through non-covalent interactions, preventing potential substrates from accessing its active site. As a result, it is secreted from cells as a propeptide-containing, enzymatically inactive protein. Phosphorylation protects the propeptide against proteolysis. As to expression, hepatocytes, kidney mesenchymal cells, intestinal ileum, colon epithelia and embryonic brain telencephalon neurons.

It localises to the cytoplasm. The protein localises to the secreted. The protein resides in the endosome. Its subcellular location is the lysosome. It is found in the cell surface. It localises to the endoplasmic reticulum. The protein localises to the golgi apparatus. Its activity is regulated as follows. Its proteolytic activity is autoinhibited by the non-covalent binding of the propeptide to the catalytic domain. Inhibited by EGTA. Its function is as follows. Crucial player in the regulation of plasma cholesterol homeostasis. Binds to low-density lipid receptor family members: low density lipoprotein receptor (LDLR), very low density lipoprotein receptor (VLDLR), apolipoprotein E receptor (LRP1/APOER) and apolipoprotein receptor 2 (LRP8/APOER2), and promotes their degradation in intracellular acidic compartments. Acts via a non-proteolytic mechanism to enhance the degradation of the hepatic LDLR through a clathrin LDLRAP1/ARH-mediated pathway. May prevent the recycling of LDLR from endosomes to the cell surface or direct it to lysosomes for degradation. Can induce ubiquitination of LDLR leading to its subsequent degradation. Inhibits intracellular degradation of APOB via the autophagosome/lysosome pathway in a LDLR-independent manner. Involved in the disposal of non-acetylated intermediates of BACE1 in the early secretory pathway. Inhibits epithelial Na(+) channel (ENaC)-mediated Na(+) absorption by reducing ENaC surface expression primarily by increasing its proteasomal degradation. Regulates neuronal apoptosis via modulation of LRP8/APOER2 levels and related anti-apoptotic signaling pathways. This Mus musculus (Mouse) protein is Proprotein convertase subtilisin/kexin type 9 (Pcsk9).